A 118-amino-acid chain; its full sequence is Putative pterin-4-alpha-carbinolamine dehydratase (118 aa).

This sequence belongs to the pterin-4-alpha-carbinolamine dehydratase family.

The catalysed reaction is (4aS,6R)-4a-hydroxy-L-erythro-5,6,7,8-tetrahydrobiopterin = (6R)-L-erythro-6,7-dihydrobiopterin + H2O. This chain is Putative pterin-4-alpha-carbinolamine dehydratase, found in Azotobacter vinelandii (strain DJ / ATCC BAA-1303).